Here is a 174-residue protein sequence, read N- to C-terminus: Bifunctional protein PyrR (174 aa).

The PRPP-binding motif lies at 97–109; it reads VVIVDDVLYTGRT.

This sequence belongs to the purine/pyrimidine phosphoribosyltransferase family. PyrR subfamily. In terms of assembly, homodimer and homohexamer; in equilibrium.

It carries out the reaction UMP + diphosphate = 5-phospho-alpha-D-ribose 1-diphosphate + uracil. Regulates transcriptional attenuation of the pyrimidine nucleotide (pyr) operon by binding in a uridine-dependent manner to specific sites on pyr mRNA. This disrupts an antiterminator hairpin in the RNA and favors formation of a downstream transcription terminator, leading to a reduced expression of downstream genes. Its function is as follows. Also displays a weak uracil phosphoribosyltransferase activity which is not physiologically significant. The chain is Bifunctional protein PyrR from Macrococcus caseolyticus (strain JCSC5402) (Macrococcoides caseolyticum).